An 88-amino-acid chain; its full sequence is Transcription factor ILI5 (88 aa).

One can recognise a bHLH domain in the interval 1–54 (MSSRRSSRGSISEEEINELISKLQSLLPNSRRRGSSQASTTKLLKETCNYIKSL).

It belongs to the bHLH protein family. As to quaternary structure, interacts with APG.

The protein localises to the nucleus. In terms of biological role, atypical and probable non DNA-binding bHLH transcription factor that acts as a positive regulator of grain size. Binds the transcription repressor APG and forms a heterodimer of antagonistic basic helix-loop-helix transcription factors that regulates grain length and weight by controlling cell elongation in lemma and palea. This is Transcription factor ILI5 (ILI5) from Oryza sativa subsp. indica (Rice).